Here is a 326-residue protein sequence, read N- to C-terminus: MHRTTRIKITELNPHLMCVLCGGYFIDATTIIECLHSFCKTCIVRYLETSKYCPICDVQVHKTRPLLNIRSDKTLQDIVYKLVPGLFKNEMKRRRDFYAAHPSADAANGSNEDRGEVADEDKRIITDDEIISLSIEFFDQNRLDRKVNKDKEKSKEEVNDKRYLRCPAAMTVMHLRKFLRSKMDIPNTFQIDVMYEEEPLKDYYTLMDIAYIYTWRRNGPLPLKYRVRPTCKRMKISHQRDGLTNAGELESDSGSDKANSPAGGIPSTSSCLPSPSTPVQSPHPQFPHISSTMNGTSNSPSGNHQSSFANRPRKSSVNGSSATSSG.

Residues C18–D57 form an RING-type zinc finger. Residues K81–R95 carry the Nuclear localization signal motif. The interval R162–K182 is interaction with PHC2. The segment at L164–R228 is interaction with E4F1. Residues I236–G326 form a disordered region. The segment covering P266 to P278 has biased composition (low complexity). Polar residues predominate over residues V279–A309. Positions S315–G326 are enriched in low complexity.

Component of a PRC1-like complex. Identified in a PRC1-like HPRC-H complex with CBX2, CBX4, CBX8, PHC1, PHC2, PHC3 RING1 and RNF2. Interacts with RNF2/RING2. Interacts with RING1. Part of a complex that contains RNF2, UB2D3 and BMI1, where RNF2 and BMI1 form a tight heterodimer, and UB2D3 interacts only with RNF2. The complex composed of RNF2, UB2D3 and BMI1 binds nucleosomes, and has activity only with nucleosomal histone H2A. Interacts with CBX7 and CBX8. Interacts with SPOP. Part of a complex consisting of BMI1, CUL3 and SPOP. Interacts with E4F1. Interacts with PHC2. Interacts with zinc finger protein ZNF277. May be part of a complex including at least ZNF277, BMI1 and RNF2/RING2. In terms of processing, monoubiquitinated. May be polyubiquitinated; which does not lead to proteasomal degradation.

The protein localises to the nucleus. It is found in the cytoplasm. Functionally, component of a Polycomb group (PcG) multiprotein PRC1-like complex, a complex class required to maintain the transcriptionally repressive state of many genes, including Hox genes, throughout development. PcG PRC1 complex acts via chromatin remodeling and modification of histones; it mediates monoubiquitination of histone H2A 'Lys-119', rendering chromatin heritably changed in its expressibility. The complex composed of RNF2, UB2D3 and BMI1 binds nucleosomes, and has activity only with nucleosomal histone H2A. In the PRC1-like complex, regulates the E3 ubiquitin-protein ligase activity of RNF2/RING2. This Homo sapiens (Human) protein is Polycomb complex protein BMI-1 (BMI1).